Consider the following 148-residue polypeptide: Puroindoline-B (148 aa).

The signal sequence occupies residues 1–19; it reads MKTLFLLALLALVASTTFA. A propeptide spanning residues 20 to 29 is cleaved from the precursor; it reads QYSEVGGWYN.

Post-translationally, five disulfide bonds are present. In terms of tissue distribution, endosperm and aleurone layer of developing kernels. In the aleurone layer, mainly localized to starch granules and the surface of the plasma membrane, forming a uniform layer, also abundant in the intercellular space. In the endosperm, mainly localized to starch granules and the plasma membrane, but less abundant in the intercellular space. Not found in roots or coleoptiles.

The protein localises to the membrane. Its subcellular location is the secreted. The protein resides in the extracellular space. In terms of biological role, acts as a membranotoxin, probably through its antibacterial and antifungal activities, contributing to the defense mechanism of the plant against predators. Forms monovalent cation-selective ion channels in membranes. Has antibacterial activity against the Gram-positive bacteria S.aureus and C.michiganensis, and the Gram-negative bacteria E.coli, P.syringae pv phaseoli, A.tumefaciens and E.carotovora subsp carotovora. Acts synergistically with PINA against bacteria. Contributes to grain texture and hardness. The chain is Puroindoline-B (PINB) from Triticum aestivum (Wheat).